A 224-amino-acid polypeptide reads, in one-letter code: uncharacterized protein (224 aa).

Residues 11-42 (YYCKYCQIFVKDTPFARRSHEQTYKHQDAIKK) form a Matrin-type zinc finger. Over residues 67-80 (ATATTASAVSSELA) the composition is skewed to low complexity. Disordered regions lie at residues 67–158 (ATAT…RNRE) and 172–224 (VKPK…YDQS). Residues 87-98 (KEHPKLRPSKKK) show a composition bias toward basic residues. Residues 108–122 (TSSTETDTISTTHTS) show a composition bias toward low complexity. Positions 175–199 (KNLDKVPKLAENEGNKSLESKESNE) are enriched in basic and acidic residues. Over residues 203–216 (VFKKKKSGKLRTKS) the composition is skewed to basic residues.

The protein localises to the nucleus. It is found in the nucleolus. This is an uncharacterized protein from Schizosaccharomyces pombe (strain 972 / ATCC 24843) (Fission yeast).